The chain runs to 399 residues: Polypyrimidine tract-binding protein homolog 1 (399 aa).

The residue at position 2 (S2) is an N-acetylserine. RRM domains follow at residues 17 to 95 (KVVH…YSNR), 109 to 196 (GNVL…YSAH), and 242 to 322 (SNVL…YSRH). The disordered stretch occupies residues 352–399 (AVSGSAPPAGWQNPQAQSQYSGYGGSPYMYPSSDPNGASPSGQPPYYG). The segment covering 365–384 (PQAQSQYSGYGGSPYMYPSS) has biased composition (low complexity).

It is found in the nucleus. In terms of biological role, plays a role in pre-mRNA splicing. Binds to the polypyrimidine tract of introns. May promote the binding of U2 snRNP to pre-mRNA. The protein is Polypyrimidine tract-binding protein homolog 1 (PTB) of Arabidopsis thaliana (Mouse-ear cress).